The sequence spans 92 residues: PqqA binding protein (92 aa).

Belongs to the PqqD family. Monomer. Interacts with PqqE.

It participates in cofactor biosynthesis; pyrroloquinoline quinone biosynthesis. Its function is as follows. Functions as a PqqA binding protein and presents PqqA to PqqE, in the pyrroloquinoline quinone (PQQ) biosynthetic pathway. This is PqqA binding protein from Stutzerimonas stutzeri (strain A1501) (Pseudomonas stutzeri).